The following is a 192-amino-acid chain: Peptidyl-prolyl cis-trans isomerase 1 (192 aa).

The 164-residue stretch at 25-188 (FFDVSIGEEP…KTVTIADCGE (164 aa)) folds into the PPIase cyclophilin-type domain.

This sequence belongs to the cyclophilin-type PPIase family.

It carries out the reaction [protein]-peptidylproline (omega=180) = [protein]-peptidylproline (omega=0). In terms of biological role, PPIases accelerate the folding of proteins. It catalyzes the cis-trans isomerization of proline imidic peptide bonds in oligopeptides. This chain is Peptidyl-prolyl cis-trans isomerase 1 (cyn-1), found in Caenorhabditis elegans.